We begin with the raw amino-acid sequence, 436 residues long: Gamma-glutamyl phosphate reductase (436 aa).

The protein belongs to the gamma-glutamyl phosphate reductase family.

It is found in the cytoplasm. It catalyses the reaction L-glutamate 5-semialdehyde + phosphate + NADP(+) = L-glutamyl 5-phosphate + NADPH + H(+). It participates in amino-acid biosynthesis; L-proline biosynthesis; L-glutamate 5-semialdehyde from L-glutamate: step 2/2. Catalyzes the NADPH-dependent reduction of L-glutamate 5-phosphate into L-glutamate 5-semialdehyde and phosphate. The product spontaneously undergoes cyclization to form 1-pyrroline-5-carboxylate. The chain is Gamma-glutamyl phosphate reductase from Prochlorococcus marinus (strain MIT 9215).